We begin with the raw amino-acid sequence, 525 residues long: Cytochrome P450 4V2 (525 aa).

The helical transmembrane segment at 13 to 33 (LLLWGAASAVSVAGATVLLNI) threads the bilayer. Heme is bound by residues glutamate 329 and cysteine 467.

The protein belongs to the cytochrome P450 family. The cofactor is heme.

The protein resides in the endoplasmic reticulum membrane. The catalysed reaction is dodecanoate + reduced [NADPH--hemoprotein reductase] + O2 = 12-hydroxydodecanoate + oxidized [NADPH--hemoprotein reductase] + H2O + H(+). It catalyses the reaction tetradecanoate + reduced [NADPH--hemoprotein reductase] + O2 = 14-hydroxytetradecanoate + oxidized [NADPH--hemoprotein reductase] + H2O + H(+). It carries out the reaction hexadecanoate + reduced [NADPH--hemoprotein reductase] + O2 = 16-hydroxyhexadecanoate + oxidized [NADPH--hemoprotein reductase] + H2O + H(+). The enzyme catalyses (5Z,8Z,11Z,14Z,17Z)-eicosapentaenoate + reduced [NADPH--hemoprotein reductase] + O2 = 20-hydroxy-(5Z,8Z,11Z,14Z,17Z)-eicosapentaenoate + oxidized [NADPH--hemoprotein reductase] + H2O + H(+). The catalysed reaction is (4Z,7Z,10Z,13Z,16Z,19Z)-docosahexaenoate + reduced [NADPH--hemoprotein reductase] + O2 = 22-hydroxy-(4Z,7Z,10Z,13Z,16Z,19Z)-docosahexaenoate + oxidized [NADPH--hemoprotein reductase] + H2O + H(+). It participates in lipid metabolism; fatty acid metabolism. With respect to regulation, inhibited by N-hydroxy-N'-(4-n-butyl-2-methylphenyl formamidine)(HET0016) with an IC(50) of 38 nM. Functionally, a cytochrome P450 monooxygenase involved in fatty acid metabolism in the eye. Catalyzes the omega-hydroxylation of polyunsaturated fatty acids (PUFAs) docosahexaenoate (DHA) and its precursor eicosapentaenoate (EPA), and may contribute to the homeostasis of these retinal PUFAs. Omega hydroxylates saturated fatty acids such as laurate, myristate and palmitate, the catalytic efficiency decreasing in the following order: myristate &gt; laurate &gt; palmitate (C14&gt;C12&gt;C16). Mechanistically, uses molecular oxygen inserting one oxygen atom into a substrate, and reducing the second into a water molecule, with two electrons provided by NADPH via cytochrome P450 reductase (CPR; NADPH-ferrihemoprotein reductase). This Rattus norvegicus (Rat) protein is Cytochrome P450 4V2 (Cyp4v2).